Consider the following 326-residue polypeptide: (+)-T-muurolol synthase ((2E,6E)-farnesyl diphosphate cyclizing) (326 aa).

The Mg(2+) site is built by aspartate 81 and aspartate 85. Residues 81–85 (DDQCD) carry the DDXXD motif motif. Arginine 175 provides a ligand contact to substrate. The Mg(2+) site is built by asparagine 221 and serine 225. Lysine 228 lines the substrate pocket. Glutamate 229 provides a ligand contact to Mg(2+). A substrate-binding site is contributed by 309-310 (RY).

Belongs to the terpene synthase family. The cofactor is Mg(2+).

It carries out the reaction (2E,6E)-farnesyl diphosphate + H2O = (+)-T-muurolol + diphosphate. The protein operates within secondary metabolite biosynthesis; terpenoid biosynthesis. Catalyzes the conversion of (2E,6E)-farnesyl diphosphate (FPP) into (+)-T-muurolol via a 1,10-cyclization, which requires isomerization of FPP to nerolidyl diphosphate (NPP) and then abstraction of the pyrophosphate from intermediate NPP leading to a (E,Z)-germacradienyl (helminthogermacradienyl) cation. This Roseiflexus castenholzii (strain DSM 13941 / HLO8) protein is (+)-T-muurolol synthase ((2E,6E)-farnesyl diphosphate cyclizing).